We begin with the raw amino-acid sequence, 695 residues long: Elongation factor G 1 (695 aa).

The 276-residue stretch at 6-281 (TRYRNIGIFA…AVVDYLPNPK (276 aa)) folds into the tr-type G domain. Residues 15–22 (AHVDAGKT), 79–83 (DTPGH), and 133–136 (NKLD) contribute to the GTP site.

The protein belongs to the TRAFAC class translation factor GTPase superfamily. Classic translation factor GTPase family. EF-G/EF-2 subfamily.

It is found in the cytoplasm. Catalyzes the GTP-dependent ribosomal translocation step during translation elongation. During this step, the ribosome changes from the pre-translocational (PRE) to the post-translocational (POST) state as the newly formed A-site-bound peptidyl-tRNA and P-site-bound deacylated tRNA move to the P and E sites, respectively. Catalyzes the coordinated movement of the two tRNA molecules, the mRNA and conformational changes in the ribosome. The protein is Elongation factor G 1 (fusA) of Synechocystis sp. (strain ATCC 27184 / PCC 6803 / Kazusa).